Here is a 76-residue protein sequence, read N- to C-terminus: Putative small nuclear ribonucleoprotein G-like protein 15 (76 aa).

In terms of domain architecture, Sm spans 4-76; that stretch reads AHPPELKKFT…IIMLEALERV (73 aa).

It belongs to the snRNP Sm proteins family.

The protein localises to the nucleus. Functionally, associated with snRNP U1, U2, U4/U6 and U5. This chain is Putative small nuclear ribonucleoprotein G-like protein 15 (SNRPGP15), found in Homo sapiens (Human).